A 775-amino-acid polypeptide reads, in one-letter code: DNA polymerase (775 aa).

It belongs to the DNA polymerase type-B family. Monomer.

The enzyme catalyses DNA(n) + a 2'-deoxyribonucleoside 5'-triphosphate = DNA(n+1) + diphosphate. Functionally, in addition to polymerase activity, this DNA polymerase exhibits 3' to 5' exonuclease activity. The protein is DNA polymerase (pol) of Pyrococcus glycovorans.